The chain runs to 140 residues: L-fucose mutarotase (140 aa).

The active-site Proton donor is H22. Substrate contacts are provided by residues D30, R107, and 129–131 (YGN).

The protein belongs to the RbsD / FucU family. FucU mutarotase subfamily. In terms of assembly, homodecamer.

The protein localises to the cytoplasm. The enzyme catalyses alpha-L-fucose = beta-L-fucose. The protein operates within carbohydrate metabolism; L-fucose metabolism. Functionally, involved in the anomeric conversion of L-fucose. This chain is L-fucose mutarotase, found in Salmonella paratyphi B (strain ATCC BAA-1250 / SPB7).